The primary structure comprises 55 residues: MKVIYNTLFKRTSTYAVAIIASAFFFERALDVTSVAIFEGINKGKLWKDIKGKYE.

The Mitochondrial matrix segment spans residues 1 to 15; sequence MKVIYNTLFKRTSTY. The helical transmembrane segment at 16-41 threads the bilayer; that stretch reads AVAIIASAFFFERALDVTSVAIFEGI. Residues 42–55 are Chloroplast intermembrane-facing; the sequence is NKGKLWKDIKGKYE.

It belongs to the UQCR10/QCR9 family. Component of the ubiquinol-cytochrome c oxidoreductase (cytochrome b-c1 complex, complex III, CIII), a multisubunit enzyme composed of 3 respiratory subunits cytochrome b, cytochrome c1 and Rieske protein, 2 core protein subunits, and additional low-molecular weight protein subunits. The complex exists as an obligatory dimer and forms supercomplexes (SCs) in the inner mitochondrial membrane with cytochrome c oxidase (complex IV, CIV).

It localises to the mitochondrion inner membrane. Component of the ubiquinol-cytochrome c oxidoreductase, a multisubunit transmembrane complex that is part of the mitochondrial electron transport chain which drives oxidative phosphorylation. The respiratory chain contains 3 multisubunit complexes succinate dehydrogenase (complex II, CII), ubiquinol-cytochrome c oxidoreductase (cytochrome b-c1 complex, complex III, CIII) and cytochrome c oxidase (complex IV, CIV), that cooperate to transfer electrons derived from NADH and succinate to molecular oxygen, creating an electrochemical gradient over the inner membrane that drives transmembrane transport and the ATP synthase. The cytochrome b-c1 complex catalyzes electron transfer from ubiquinol to cytochrome c, linking this redox reaction to translocation of protons across the mitochondrial inner membrane, with protons being carried across the membrane as hydrogens on the quinol. In the process called Q cycle, 2 protons are consumed from the matrix, 4 protons are released into the intermembrane space and 2 electrons are passed to cytochrome c. This chain is Cytochrome b-c1 complex subunit 9 (ox), found in Drosophila melanogaster (Fruit fly).